A 286-amino-acid polypeptide reads, in one-letter code: Diaminopimelate epimerase (286 aa).

2 residues coordinate substrate: asparagine 12 and asparagine 67. Catalysis depends on cysteine 76, which acts as the Proton donor. Substrate-binding positions include glycine 77–asparagine 78, asparagine 165, asparagine 198, and glutamate 216–arginine 217. Cysteine 225 functions as the Proton acceptor in the catalytic mechanism. Glycine 226 to threonine 227 is a substrate binding site.

This sequence belongs to the diaminopimelate epimerase family. As to quaternary structure, homodimer.

Its subcellular location is the cytoplasm. It catalyses the reaction (2S,6S)-2,6-diaminopimelate = meso-2,6-diaminopimelate. It functions in the pathway amino-acid biosynthesis; L-lysine biosynthesis via DAP pathway; DL-2,6-diaminopimelate from LL-2,6-diaminopimelate: step 1/1. Functionally, catalyzes the stereoinversion of LL-2,6-diaminopimelate (L,L-DAP) to meso-diaminopimelate (meso-DAP), a precursor of L-lysine. The polypeptide is Diaminopimelate epimerase (Methanothermobacter thermautotrophicus (strain ATCC 29096 / DSM 1053 / JCM 10044 / NBRC 100330 / Delta H) (Methanobacterium thermoautotrophicum)).